Reading from the N-terminus, the 25-residue chain is MKRIGVLTSGGDSPGMNAAIRAVVR.

G11 lines the ATP pocket.

Belongs to the phosphofructokinase type A (PFKA) family. ATP-dependent PFK group I subfamily. Prokaryotic clade 'B1' sub-subfamily. As to quaternary structure, homotetramer. The cofactor is Mg(2+).

It is found in the cytoplasm. The catalysed reaction is beta-D-fructose 6-phosphate + ATP = beta-D-fructose 1,6-bisphosphate + ADP + H(+). It functions in the pathway carbohydrate degradation; glycolysis; D-glyceraldehyde 3-phosphate and glycerone phosphate from D-glucose: step 3/4. With respect to regulation, in contrast with PFK1 this enzyme is not affected by phosphoenolpyruvate. Functionally, catalyzes the phosphorylation of D-fructose 6-phosphate to fructose 1,6-bisphosphate by ATP, the first committing step of glycolysis. The chain is ATP-dependent 6-phosphofructokinase 2 (pfkA2) from Thermus thermophilus (strain ATCC 27634 / DSM 579 / HB8).